The sequence spans 165 residues: Thiol peroxidase (165 aa).

The region spanning 18–164 (RKVGDKAPNF…YEAAIEAAKK (147 aa)) is the Thioredoxin domain. C60 functions as the Cysteine sulfenic acid (-SOH) intermediate in the catalytic mechanism. C60 and C94 are joined by a disulfide.

This sequence belongs to the peroxiredoxin family. Tpx subfamily. In terms of assembly, homodimer.

The enzyme catalyses a hydroperoxide + [thioredoxin]-dithiol = an alcohol + [thioredoxin]-disulfide + H2O. In terms of biological role, thiol-specific peroxidase that catalyzes the reduction of hydrogen peroxide and organic hydroperoxides to water and alcohols, respectively. Plays a role in cell protection against oxidative stress by detoxifying peroxides. This chain is Thiol peroxidase, found in Listeria monocytogenes serotype 4b (strain F2365).